Consider the following 245-residue polypeptide: Ribonuclease 3 (245 aa).

In terms of domain architecture, RNase III spans 17–146 (FTDKMKSLGL…FVGALYLDQG (130 aa)). Glutamate 59 is a Mg(2+) binding site. Aspartate 63 is a catalytic residue. The Mg(2+) site is built by aspartate 132 and glutamate 135. Residue glutamate 135 is part of the active site. One can recognise a DRBM domain in the interval 172 to 241 (DFKTQFQEYV…AEQAYKLMKN (70 aa)).

It belongs to the ribonuclease III family. In terms of assembly, homodimer. Mg(2+) is required as a cofactor.

The protein resides in the cytoplasm. The enzyme catalyses Endonucleolytic cleavage to 5'-phosphomonoester.. Functionally, digests double-stranded RNA. Involved in the processing of primary rRNA transcript to yield the immediate precursors to the large and small rRNAs (23S and 16S). Processes some mRNAs, and tRNAs when they are encoded in the rRNA operon. Processes pre-crRNA and tracrRNA of type II CRISPR loci if present in the organism. In Staphylococcus epidermidis (strain ATCC 12228 / FDA PCI 1200), this protein is Ribonuclease 3.